The chain runs to 186 residues: uncharacterized protein (186 aa).

The Macro domain occupies 1 to 181; the sequence is MVSFSYKGNL…TFVSLASDFL (181 aa).

This sequence belongs to the MacroD-type family.

This is an uncharacterized protein from Thermoplasma volcanium (strain ATCC 51530 / DSM 4299 / JCM 9571 / NBRC 15438 / GSS1).